The chain runs to 401 residues: Phosphoglycerate kinase 3, cytosolic (401 aa).

Residues Val-24, Asp-25, Asn-27, Arg-41, Ser-63, His-64, Gly-66, Arg-67, Arg-122, His-154, and Arg-155 each coordinate (2R)-3-phosphoglycerate. Gly-200 is an ADP binding site. Gly-200 serves as a coordination point for CDP. Lys-202 and Lys-206 together coordinate AMP. Lys-206 is a binding site for ATP. Gly-224 contacts ADP. Gly-224 is a CDP binding site. Gly-225 and Gly-297 together coordinate AMP. ATP contacts are provided by Gly-225, Gly-297, and Asn-321. The CDP site is built by Gly-322 and Phe-327. Phe-327 lines the ADP pocket. Glu-328 lines the AMP pocket. Positions 328, 359, and 360 each coordinate ATP. Asp-359 is a Mg(2+) binding site.

It belongs to the phosphoglycerate kinase family. Monomer. Requires Mg(2+) as cofactor. As to expression, expressed in roots, leaves and inflorescence.

The protein resides in the cytoplasm. It carries out the reaction (2R)-3-phosphoglycerate + ATP = (2R)-3-phospho-glyceroyl phosphate + ADP. It functions in the pathway carbohydrate degradation; glycolysis; pyruvate from D-glyceraldehyde 3-phosphate: step 2/5. This Arabidopsis thaliana (Mouse-ear cress) protein is Phosphoglycerate kinase 3, cytosolic.